A 461-amino-acid polypeptide reads, in one-letter code: Protein ultraspiracle homolog (461 aa).

A modulating region spans residues 1-112 (MSSVAKKDKR…NHPLSGSKHL (112 aa)). Residues 26–51 (PAPHQQQSMPSSQPSNFLQPLATPST) form a disordered region. The span at 27–40 (APHQQQSMPSSQPS) shows a compositional bias: low complexity. Residues 41-51 (NFLQPLATPST) show a composition bias toward polar residues. 2 consecutive NR C4-type zinc fingers follow at residues 113-133 (CSICGDRASGKHYGVYSCEGC) and 149-173 (CREDRNCIIDKRQRNRCQYCRYQKC). Positions 113-185 (CSICGDRASG…CGMKREAVQE (73 aa)) form a DNA-binding region, nuclear receptor. Residues 185-192 (EERQRAAR) are hinge. Residues 203 to 452 (VQELSIERLL…SYIHDALRNH (250 aa)) form the NR LBD domain.

Belongs to the nuclear hormone receptor family. NR2 subfamily. As to quaternary structure, heterodimer of USP and ECR. Only the heterodimer is capable of high-affinity binding to ecdysone.

Its subcellular location is the nucleus. Its function is as follows. Receptor for ecdysone. May be an important modulator of insect metamorphosis. The polypeptide is Protein ultraspiracle homolog (USP) (Manduca sexta (Tobacco hawkmoth)).